The following is a 546-amino-acid chain: Probable ganciclovir kinase (546 aa).

Residues 1–11 (MEQLKTPQNQK) are compositionally biased toward polar residues. Residues 1–29 (MEQLKTPQNQKTRPRNMLPKKKGKELKKR) are disordered. Over residues 12 to 29 (TRPRNMLPKKKGKELKKR) the composition is skewed to basic residues. Residues 185 to 193 (LGSGSYGMV) and Lys202 contribute to the ATP site. Asp297 acts as the Proton acceptor in catalysis.

The protein belongs to the protein kinase superfamily. Tyr protein kinase family. HCMV ganciclovir subfamily.

In terms of biological role, phosphorylates the antiviral nucleoside analog ganciclovir. The chain is Probable ganciclovir kinase (U69) from Human herpesvirus 7 (strain JI) (HHV-7).